A 403-amino-acid polypeptide reads, in one-letter code: Poly(rC)-binding protein 4 (403 aa).

KH domains are found at residues 17-67, 101-154, and 241-293; these read TLTL…TITG, PVTL…TVSG, and TSSQ…TITG.

Its subcellular location is the cytoplasm. In terms of biological role, single-stranded nucleic acid binding protein that binds preferentially to oligo dC. The polypeptide is Poly(rC)-binding protein 4 (PCBP4) (Bos taurus (Bovine)).